The primary structure comprises 171 residues: MPKRPAENPEQSDDFVSKSQKKREMAERQELGTQLVNLTDSQLAKMPLDDELRDAVLLARKIRNKHEGYRRQLQFIGKLMRLRDIAPIEQALNNLKNAHQQQTSIFHEIETTRDKLLHEGDDALQEFIEEHPHADRQKLRQLIRLAEKQRAEQKPPVAARQLFVYLRELLG.

Residues 1–30 (MPKRPAENPEQSDDFVSKSQKKREMAERQE) form a disordered region.

The protein belongs to the DarP family.

Its subcellular location is the cytoplasm. Its function is as follows. Member of a network of 50S ribosomal subunit biogenesis factors which assembles along the 30S-50S interface, preventing incorrect 23S rRNA structures from forming. Promotes peptidyl transferase center (PTC) maturation. In Idiomarina loihiensis (strain ATCC BAA-735 / DSM 15497 / L2-TR), this protein is Dual-action ribosomal maturation protein DarP.